The sequence spans 125 residues: Phosphoribosyl-AMP cyclohydrolase (125 aa).

D74 lines the Mg(2+) pocket. Residue C75 coordinates Zn(2+). D76 and D78 together coordinate Mg(2+). C92 and C99 together coordinate Zn(2+).

Belongs to the PRA-CH family. In terms of assembly, homodimer. The cofactor is Mg(2+). It depends on Zn(2+) as a cofactor.

It is found in the cytoplasm. The catalysed reaction is 1-(5-phospho-beta-D-ribosyl)-5'-AMP + H2O = 1-(5-phospho-beta-D-ribosyl)-5-[(5-phospho-beta-D-ribosylamino)methylideneamino]imidazole-4-carboxamide. It functions in the pathway amino-acid biosynthesis; L-histidine biosynthesis; L-histidine from 5-phospho-alpha-D-ribose 1-diphosphate: step 3/9. Functionally, catalyzes the hydrolysis of the adenine ring of phosphoribosyl-AMP. The protein is Phosphoribosyl-AMP cyclohydrolase of Geobacter sulfurreducens (strain ATCC 51573 / DSM 12127 / PCA).